We begin with the raw amino-acid sequence, 194 residues long: dCTP deaminase, dUMP-forming (194 aa).

DCTP-binding positions include 105-110, D123, 131-133, Q152, Y166, K174, and Q178; these read RSSMGR and TLE. Residue E133 is the Proton donor/acceptor of the active site.

It belongs to the dCTP deaminase family. Homotrimer.

The enzyme catalyses dCTP + 2 H2O = dUMP + NH4(+) + diphosphate. Its pathway is pyrimidine metabolism; dUMP biosynthesis; dUMP from dCTP: step 1/1. Functionally, bifunctional enzyme that catalyzes both the deamination of dCTP to dUTP and the hydrolysis of dUTP to dUMP without releasing the toxic dUTP intermediate. In Methanobrevibacter smithii (strain ATCC 35061 / DSM 861 / OCM 144 / PS), this protein is dCTP deaminase, dUMP-forming.